The sequence spans 141 residues: uncharacterized protein (141 aa).

An HTH marR-type domain is found at 4-139 (RTQMMYDMET…LIELFSKLDK (136 aa)). Positions 53 to 76 (VTEFAPILEVSASHITAVTDALVE) form a DNA-binding region, H-T-H motif.

This is an uncharacterized protein from Bacillus subtilis (strain 168).